Here is a 166-residue protein sequence, read N- to C-terminus: Regulator of ribonuclease activity A (166 aa).

Belongs to the RraA family. As to quaternary structure, homotrimer. Binds to both RNA-binding sites in the C-terminal region of Rne and to RhlB.

The protein resides in the cytoplasm. Functionally, globally modulates RNA abundance by binding to RNase E (Rne) and regulating its endonucleolytic activity. Can modulate Rne action in a substrate-dependent manner by altering the composition of the degradosome. Modulates RNA-binding and helicase activities of the degradosome. This is Regulator of ribonuclease activity A from Mannheimia succiniciproducens (strain KCTC 0769BP / MBEL55E).